Reading from the N-terminus, the 365-residue chain is Histidinol-phosphate aminotransferase (365 aa).

K221 is modified (N6-(pyridoxal phosphate)lysine).

This sequence belongs to the class-II pyridoxal-phosphate-dependent aminotransferase family. Histidinol-phosphate aminotransferase subfamily. In terms of assembly, homodimer. Requires pyridoxal 5'-phosphate as cofactor.

The enzyme catalyses L-histidinol phosphate + 2-oxoglutarate = 3-(imidazol-4-yl)-2-oxopropyl phosphate + L-glutamate. It functions in the pathway amino-acid biosynthesis; L-histidine biosynthesis; L-histidine from 5-phospho-alpha-D-ribose 1-diphosphate: step 7/9. The protein is Histidinol-phosphate aminotransferase of Nitrobacter hamburgensis (strain DSM 10229 / NCIMB 13809 / X14).